Reading from the N-terminus, the 363-residue chain is UDP-N-acetylglucosamine--N-acetylmuramyl-(pentapeptide) pyrophosphoryl-undecaprenol N-acetylglucosamine transferase (363 aa).

Residues 12-14 (TAG), Ser196, and Gln291 each bind UDP-N-acetyl-alpha-D-glucosamine.

The protein belongs to the glycosyltransferase 28 family. MurG subfamily.

The protein localises to the cell inner membrane. It carries out the reaction di-trans,octa-cis-undecaprenyl diphospho-N-acetyl-alpha-D-muramoyl-L-alanyl-D-glutamyl-meso-2,6-diaminopimeloyl-D-alanyl-D-alanine + UDP-N-acetyl-alpha-D-glucosamine = di-trans,octa-cis-undecaprenyl diphospho-[N-acetyl-alpha-D-glucosaminyl-(1-&gt;4)]-N-acetyl-alpha-D-muramoyl-L-alanyl-D-glutamyl-meso-2,6-diaminopimeloyl-D-alanyl-D-alanine + UDP + H(+). It functions in the pathway cell wall biogenesis; peptidoglycan biosynthesis. Its function is as follows. Cell wall formation. Catalyzes the transfer of a GlcNAc subunit on undecaprenyl-pyrophosphoryl-MurNAc-pentapeptide (lipid intermediate I) to form undecaprenyl-pyrophosphoryl-MurNAc-(pentapeptide)GlcNAc (lipid intermediate II). In Legionella pneumophila (strain Corby), this protein is UDP-N-acetylglucosamine--N-acetylmuramyl-(pentapeptide) pyrophosphoryl-undecaprenol N-acetylglucosamine transferase.